The following is a 154-amino-acid chain: Ribosomal RNA large subunit methyltransferase H (154 aa).

Residue G102 coordinates S-adenosyl-L-methionine.

The protein belongs to the RNA methyltransferase RlmH family. As to quaternary structure, homodimer.

It is found in the cytoplasm. The catalysed reaction is pseudouridine(1915) in 23S rRNA + S-adenosyl-L-methionine = N(3)-methylpseudouridine(1915) in 23S rRNA + S-adenosyl-L-homocysteine + H(+). In terms of biological role, specifically methylates the pseudouridine at position 1915 (m3Psi1915) in 23S rRNA. The protein is Ribosomal RNA large subunit methyltransferase H of Phenylobacterium zucineum (strain HLK1).